A 599-amino-acid chain; its full sequence is Sulfite reductase [NADPH] flavoprotein alpha-component (599 aa).

The 139-residue stretch at 64–202 (ITIISASQTG…AASEWRARVV (139 aa)) folds into the Flavodoxin-like domain. FMN is bound by residues 70-75 (SQTGNA), 117-120 (STQG), and 153-162 (LGDSSYEFFC). The FAD-binding FR-type domain occupies 234-448 (DAPLVASLSV…IEHNDNFRLP (215 aa)). FAD is bound by residues threonine 322, alanine 356, 386 to 389 (RLYS), 404 to 406 (TVG), tyrosine 410, and 419 to 422 (GGAS). NADP(+) is bound by residues 519-520 (SR), 525-529 (KVYVQ), and aspartate 561. Tyrosine 599 contacts FAD.

It belongs to the NADPH-dependent sulphite reductase flavoprotein subunit CysJ family. The protein in the N-terminal section; belongs to the flavodoxin family. In the C-terminal section; belongs to the flavoprotein pyridine nucleotide cytochrome reductase family. In terms of assembly, alpha(8)-beta(8). The alpha component is a flavoprotein, the beta component is a hemoprotein. FAD serves as cofactor. Requires FMN as cofactor.

The enzyme catalyses hydrogen sulfide + 3 NADP(+) + 3 H2O = sulfite + 3 NADPH + 4 H(+). It functions in the pathway sulfur metabolism; hydrogen sulfide biosynthesis; hydrogen sulfide from sulfite (NADPH route): step 1/1. Functionally, component of the sulfite reductase complex that catalyzes the 6-electron reduction of sulfite to sulfide. This is one of several activities required for the biosynthesis of L-cysteine from sulfate. The flavoprotein component catalyzes the electron flow from NADPH -&gt; FAD -&gt; FMN to the hemoprotein component. The chain is Sulfite reductase [NADPH] flavoprotein alpha-component from Escherichia coli O157:H7.